The primary structure comprises 218 residues: MSMGLEIAGTSLAVLGWLSTIVCCALPMWRVTAFIGSSIITAQITWEGLWMNCVVQSTGQMQCKVYDSLLALPQDLQAARALIVVSILLAAFGLLVALVGAQCTNCVQDDTAKAKITIVAGVLFLLAALLTLVPVSWSANTIIRDFYNPLVPDAQKREMGAGLYVGWAAAALQLLGGALLCCSCPPRDKKYAPTKIVYSAPRSAGPGTSTAYDRKDYV.

Residues Met1–Ala8 lie on the Cytoplasmic side of the membrane. The helical transmembrane segment at Gly9–Trp29 threads the bilayer. At Arg30 to Arg80 the chain is on the extracellular side. Residues Ala81–Ala101 traverse the membrane as a helical segment. Residues Gln102–Lys115 are Cytoplasmic-facing. The chain crosses the membrane as a helical span at residues Ile116 to Ser136. Residues Trp137 to Met159 lie on the Extracellular side of the membrane. A helical membrane pass occupies residues Gly160–Leu180. Topologically, residues Cys181–Val218 are cytoplasmic. The residue at position 198 (Tyr198) is a Phosphotyrosine. 2 positions are modified to phosphoserine: Ser199 and Ser209. Residues Tyr217–Val218 form an interactions with TJP1, TJP2 and TJP3 region.

It belongs to the claudin family. As to quaternary structure, can form homo- and heteropolymers with other CLDN. Homopolymers interact with CLDN1 and CLDN2 homopolymers. Interacts in cis (within the same plasma membrane) with CLDN19. Directly interacts with TJP1/ZO-1, TJP2/ZO-2 and TJP3/ZO-3.

Its subcellular location is the cell junction. It localises to the tight junction. It is found in the cell membrane. Its function is as follows. Plays a major role in tight junction-specific obliteration of the intercellular space, through calcium-independent cell-adhesion activity. The sequence is that of Claudin-3 (CLDN3) from Canis lupus familiaris (Dog).